Here is a 244-residue protein sequence, read N- to C-terminus: Probable transcriptional regulatory protein Dgeo_2194 (244 aa).

Residues 1–21 (MAGHSKWAQIKRKKGANDKKR) form a disordered region.

Belongs to the TACO1 family.

It localises to the cytoplasm. The sequence is that of Probable transcriptional regulatory protein Dgeo_2194 from Deinococcus geothermalis (strain DSM 11300 / CIP 105573 / AG-3a).